We begin with the raw amino-acid sequence, 397 residues long: Elongation factor Tu-1 (397 aa).

The tr-type G domain maps to 10–206 (KPHVNIGTIG…AVDESIPEPE (197 aa)). The interval 19–26 (GHIDHGKT) is G1. 19–26 (GHIDHGKT) contributes to the GTP binding site. T26 contributes to the Mg(2+) binding site. The G2 stretch occupies residues 62-66 (GITIS). The G3 stretch occupies residues 83-86 (DCPG). GTP contacts are provided by residues 83-87 (DCPGH) and 138-141 (NKAD). Positions 138–141 (NKAD) are G4. Positions 176 to 178 (SAL) are G5.

This sequence belongs to the TRAFAC class translation factor GTPase superfamily. Classic translation factor GTPase family. EF-Tu/EF-1A subfamily. As to quaternary structure, monomer.

The protein localises to the cytoplasm. It catalyses the reaction GTP + H2O = GDP + phosphate + H(+). In terms of biological role, GTP hydrolase that promotes the GTP-dependent binding of aminoacyl-tRNA to the A-site of ribosomes during protein biosynthesis. This chain is Elongation factor Tu-1, found in Streptomyces ramocissimus.